The following is a 482-amino-acid chain: Catalase (482 aa).

Residues H53 and N126 contribute to the active site. Residue Y336 participates in heme binding.

Belongs to the catalase family. Heme is required as a cofactor.

It is found in the periplasm. It carries out the reaction 2 H2O2 = O2 + 2 H2O. Its function is as follows. Decomposes hydrogen peroxide into water and oxygen; serves to protect cells from the toxic effects of hydrogen peroxide. Could protect cells in nodules which have a high potential to produce hydrogen peroxide because of the strong reducing conditions required for nitrogen fixation and the action of several proteins. The chain is Catalase (katA) from Aliivibrio fischeri (strain ATCC 700601 / ES114) (Vibrio fischeri).